The chain runs to 92 residues: MARSLWKGPFVDGYLFKKAEAARGSSRSEVIKIWSRRSTILPQFVGLTFGVHNGQKHIPVYVTEEMVGHKFGEFSPTRTFPGHAADKKAKRR.

The protein belongs to the universal ribosomal protein uS19 family.

In terms of biological role, protein S19 forms a complex with S13 that binds strongly to the 16S ribosomal RNA. In Methylobacterium radiotolerans (strain ATCC 27329 / DSM 1819 / JCM 2831 / NBRC 15690 / NCIMB 10815 / 0-1), this protein is Small ribosomal subunit protein uS19.